A 357-amino-acid polypeptide reads, in one-letter code: 3-dehydroquinate synthase (357 aa).

NAD(+) contacts are provided by residues 104–108 (GVVGD), 128–129 (TT), Lys141, and 168–171 (FLET). Positions 183, 243, and 260 each coordinate Zn(2+).

It belongs to the sugar phosphate cyclases superfamily. Dehydroquinate synthase family. The cofactor is NAD(+). Requires Co(2+) as cofactor. It depends on Zn(2+) as a cofactor.

It localises to the cytoplasm. It catalyses the reaction 7-phospho-2-dehydro-3-deoxy-D-arabino-heptonate = 3-dehydroquinate + phosphate. It participates in metabolic intermediate biosynthesis; chorismate biosynthesis; chorismate from D-erythrose 4-phosphate and phosphoenolpyruvate: step 2/7. Functionally, catalyzes the conversion of 3-deoxy-D-arabino-heptulosonate 7-phosphate (DAHP) to dehydroquinate (DHQ). In Streptococcus pyogenes serotype M6 (strain ATCC BAA-946 / MGAS10394), this protein is 3-dehydroquinate synthase.